The primary structure comprises 280 residues: uncharacterized protein (280 aa).

3–29 (KKIAIVTGASSGFGLLAAVKLARSFFV) is a binding site for NADP(+). S139 serves as a coordination point for substrate. Y152 serves as the catalytic Proton acceptor.

Belongs to the short-chain dehydrogenases/reductases (SDR) family.

This is an uncharacterized protein from Bacillus subtilis (strain 168).